Consider the following 1153-residue polypeptide: Duffy receptor beta form (1153 aa).

Positions 1 to 21 (MEGKKKRPLFFLLVLLLSHKA) are cleaved as a signal peptide. The Extracellular segment spans residues 22 to 1085 (NNVLFERMKG…YECFTKGSST (1064 aa)). Asn-134, Asn-179, and Asn-202 each carry an N-linked (GlcNAc...) asparagine glycan. Cystine bridges form between Cys-214/Cys-243 and Cys-227/Cys-234. Residues Asn-252 and Asn-348 are each glycosylated (N-linked (GlcNAc...) asparagine). Cystine bridges form between Cys-297-Cys-374, Cys-412-Cys-429, Cys-424-Cys-504, and Cys-433-Cys-502. Asn-430 and Asn-467 each carry an N-linked (GlcNAc...) asparagine glycan. Disordered stretches follow at residues 520–545 (LKSAPKLETQRSHSTIQPMSSSGAEK), 565–591 (DEAAKGDGQNGNQTVAESNIKGTDNIE), 612–631 (RGATDITETGEEKLNTSYSG), and 655–981 (ENSE…LYSH). 2 stretches are compositionally biased toward polar residues: residues 531-542 (SHSTIQPMSSSG) and 574-586 (NGNQTVAESNIKG). Residues Asn-576 and Asn-626 are each glycosylated (N-linked (GlcNAc...) asparagine). Basic and acidic residues predominate over residues 661–675 (LETKHKIFEPSKDNS). The span at 677–733 (NSENSGSMEFKATSSNPITEAVESSSAEGQVQEDSAHRSVNTGRDNSTISAATSDDG) shows a compositional bias: polar residues. A glycan (N-linked (GlcNAc...) asparagine) is linked at Asn-722. A compositionally biased stretch (basic and acidic residues) spans 791–800 (IDGKNVDIAE). Over residues 819–834 (TDNGNVPRSGNKQNEG) the composition is skewed to polar residues. Residues Asn-847 and Asn-856 are each glycosylated (N-linked (GlcNAc...) asparagine). Residues 867-878 (GNEKDFQKHDFM) are compositionally biased toward basic and acidic residues. Positions 884–942 (NDQTSSDQTSSDQTSSNQTSSDQTSSNQTSSDQTSSDQISSDQTSSDQTSSNQTSSDQT) are enriched in low complexity. Asn-900, Asn-910, and Asn-935 each carry an N-linked (GlcNAc...) asparagine glycan. A compositionally biased stretch (basic and acidic residues) spans 945-969 (TEEHHRDNVRNPEIKSSEDMSKGDF). Residues 971–981 (RNSNSNELYSH) show a composition bias toward polar residues. The helical transmembrane segment at 1086–1106 (GIGIVYFATGGAFLIILLLFV) threads the bilayer. Topologically, residues 1107–1153 (SKNVASNDYEEEATFDEFVEYSDDIHRTPLMPNHIEHMQQFTPLDYS) are cytoplasmic.

It localises to the membrane. Binds to Neu5Gc-sialylated receptors on macaque erythrocytes. This Plasmodium knowlesi protein is Duffy receptor beta form.